We begin with the raw amino-acid sequence, 183 residues long: ATP synthase subunit b, chloroplastic (183 aa).

Residues 20–42 (INTNVFETNIINLAIVVGTLFYY) traverse the membrane as a helical segment.

The protein belongs to the ATPase B chain family. In terms of assembly, F-type ATPases have 2 components, F(1) - the catalytic core - and F(0) - the membrane proton channel. F(1) has five subunits: alpha(3), beta(3), gamma(1), delta(1), epsilon(1). F(0) has four main subunits: a(1), b(1), b'(1) and c(10-14). The alpha and beta chains form an alternating ring which encloses part of the gamma chain. F(1) is attached to F(0) by a central stalk formed by the gamma and epsilon chains, while a peripheral stalk is formed by the delta, b and b' chains.

Its subcellular location is the plastid. The protein resides in the chloroplast thylakoid membrane. Functionally, f(1)F(0) ATP synthase produces ATP from ADP in the presence of a proton or sodium gradient. F-type ATPases consist of two structural domains, F(1) containing the extramembraneous catalytic core and F(0) containing the membrane proton channel, linked together by a central stalk and a peripheral stalk. During catalysis, ATP synthesis in the catalytic domain of F(1) is coupled via a rotary mechanism of the central stalk subunits to proton translocation. In terms of biological role, component of the F(0) channel, it forms part of the peripheral stalk, linking F(1) to F(0). This is ATP synthase subunit b, chloroplastic from Euglena gracilis.